The sequence spans 545 residues: RAN GTPase-activating protein 2 (545 aa).

Positions 1 to 116 are WPP; the sequence is MADILDSRPH…VAARELISED (116 aa). LRR repeat units lie at residues 213–236, 241–264, 269–296, 325–348, 353–380, 382–405, 410–433, 439–462, and 467–494; these read GSILSSLNLSDNALGEKGVRAFGA, LSSLEELYLMNDGISKEAAQAVSE, TENLRVLHFHNNMTGDEGALAIAEVVKR, CTHMEKLDLRDNMFGTEAGVSLSK, FKHMTELYLSYLNLEDEGAIAIVNALKE, ASPIEVLEMAGNDITVEAASAIAA, KQDLNKLNLSENELKDEGCVQIAN, HSKLQYIDMSTNYIRRAGARALAH, and KEAFKLLNIDGNIISEEGIEELKEIFKK. Positions 496–545 are disordered; sequence PELLGALDENDPDGEEDDDDEEDEEDEENEGNGNGELESKLKNLEVNQED. The segment covering 503–525 has biased composition (acidic residues); that stretch reads DENDPDGEEDDDDEEDEEDEENE.

This sequence belongs to the RNA1 family. In terms of assembly, homodimer. Interacts with WIP1 and WIP2 through its WPP domain. Component of Ran complexes at least composed of WIT1 or WIT2, RANGAP1 or RANGAP2, and WIP1 or WIP2 or WIP3. Interacts with WIT1.

The protein resides in the cytoplasm. The protein localises to the nucleus membrane. It localises to the cytoskeleton. Its subcellular location is the spindle. It is found in the phragmoplast. Functionally, GTPase activator for the nuclear Ras-related regulatory protein Ran, converting it to the putatively inactive GDP-bound state. This chain is RAN GTPase-activating protein 2 (RANGAP2), found in Arabidopsis thaliana (Mouse-ear cress).